A 198-amino-acid chain; its full sequence is MKQFIDFIPLLLFFIVYKLDPRTVDVAGHELTVGGIYSATAMLIISSLVVYGALFIKQRKLEKSQWLTLIACLVFGSLTLAFHSETFLKWKAPVVNWLFALAFIGSHFIGDRLLIKRIMGHALTLPDPVWTRLNIAWIAFFLFCGAANLFVAFTFQSIWVDFKVFGSLGMTVLFLVGQGIYLSRHLHDADTTTPKTED.

5 helical membrane passes run 36-56 (IYSA…ALFI), 67-87 (LTLI…SETF), 90-110 (WKAP…HFIG), 135-155 (IAWI…AFTF), and 162-182 (FKVF…GIYL).

It belongs to the YciB family.

The protein localises to the cell inner membrane. In terms of biological role, plays a role in cell envelope biogenesis, maintenance of cell envelope integrity and membrane homeostasis. The sequence is that of Inner membrane-spanning protein YciB from Pseudomonas fluorescens (strain Pf0-1).